The chain runs to 601 residues: MCGITGYIGTDPTGRIVHEGLQNLEYRGYDSAGIALAGGGSLSVHKTGGEVGDLPVPSREDGTRGIGHTRWSTHGEPTRENAHPHTDCTGDVAVVHNGIIENYAALADELRADHVFHSDTDTEVVPHLIETHLADGVSLLTAVQRTTERLTGSYALAITAAGHDGIVVARSDSPLLLGHGDTGTFVASDATAFIEHTNRVTYLRNGDIAHLTETEWTVYNDGARVSRDIEALDWSADAAGKSGYDHYMLKEIHEQPRALRQAISGRISDLGTDVTLDMELSTETLQNVAELQIVACGTSYHAGLYAKELLETHADLPVTVHVASEYELRGGRSPEDTLVVAITQSGETADTLAALRSAAQKGAPTLALTNTLGSTVTREADDALFIRAGPEIGVAATKTFVSQVATAALLTMHIGRARNAISTGDAAALRDAIRDLPGAVQQVLDQAPEIASIGREYADSDAFFYVGRRAGRPVALESALKLKEISYDHAEGFSAGELKHGPLALVTDNTPVVAVLTEYAAPERTANNVKEVQSRGADVIGLASDAGTARHADVTITLPACGPLEPVVANVALQLFAYHIANEKGRPIDKPRNLAKSVTVE.

Cys-2 acts as the Nucleophile; for GATase activity in catalysis. The region spanning 2–214 is the Glutamine amidotransferase type-2 domain; the sequence is CGITGYIGTD…NGDIAHLTET (213 aa). SIS domains are found at residues 281 to 420 and 453 to 591; these read STET…ARNA and IGRE…IDKP. Residue Lys-596 is the For Fru-6P isomerization activity of the active site.

In terms of assembly, homodimer.

The protein localises to the cytoplasm. It catalyses the reaction D-fructose 6-phosphate + L-glutamine = D-glucosamine 6-phosphate + L-glutamate. Functionally, catalyzes the first step in hexosamine metabolism, converting fructose-6P into glucosamine-6P using glutamine as a nitrogen source. This is Glutamine--fructose-6-phosphate aminotransferase [isomerizing] from Halobacterium salinarum (strain ATCC 700922 / JCM 11081 / NRC-1) (Halobacterium halobium).